A 106-amino-acid chain; its full sequence is Small ribosomal subunit protein bS6 (106 aa).

This sequence belongs to the bacterial ribosomal protein bS6 family.

In terms of biological role, binds together with bS18 to 16S ribosomal RNA. This chain is Small ribosomal subunit protein bS6, found in Cyanothece sp. (strain PCC 7425 / ATCC 29141).